Consider the following 72-residue polypeptide: uncharacterized protein (72 aa).

This sequence belongs to the phage portal family. HK97 subfamily.

This is an uncharacterized protein from Rickettsia conorii (strain ATCC VR-613 / Malish 7).